We begin with the raw amino-acid sequence, 324 residues long: Antihemorrhagic factor jMSF (324 aa).

The first 19 residues, Met1 to Ser19, serve as a signal peptide directing secretion. 2 consecutive Cystatin fetuin-A-type domains span residues Val22 to His130 and Arg141 to Val254. Residues Arg23–Asp25 carry the Cell attachment site motif. 7 disulfide bridges follow: Cys28/Cys315, Cys85/Cys96, Cys110/Cys129, Cys143/Cys146, Cys205/Cys217, Cys230/Cys253, and Cys287/Cys291. N-linked (GlcNAc...) asparagine glycosylation occurs at Asn204. N-linked (GlcNAc...) asparagine glycosylation is present at Asn282.

In terms of assembly, homodimer. As to expression, expressed by the liver.

It localises to the secreted. Its function is as follows. Suppress hemorrhage induced by metalloproteinases from the same venom (brevilysin-H3, -H4, -H6) and from habu venom (weak inhibition of the metalloproteinases HR2A). The non-hemorrhagic brevilysin-H2 is strongly inhibited by jMSF, whereas the brevilysin-L6 is not inhibited. Does not inhibit serine and cysteine proteases such as trypsin, chymotrypsin, thermolysin, and papain. The inhibition may occur by formation of a non-covalent complex between this protein and the proteinases at their metalloproteinase domains. The protein is Antihemorrhagic factor jMSF of Gloydius blomhoffii (Mamushi).